Here is a 751-residue protein sequence, read N- to C-terminus: Valine--tRNA ligase (751 aa).

Lys-520 is an ATP binding site.

The protein belongs to the class-I aminoacyl-tRNA synthetase family. ValS type 2 subfamily.

Its subcellular location is the cytoplasm. It carries out the reaction tRNA(Val) + L-valine + ATP = L-valyl-tRNA(Val) + AMP + diphosphate. In terms of biological role, catalyzes the attachment of valine to tRNA(Val). As ValRS can inadvertently accommodate and process structurally similar amino acids such as threonine, to avoid such errors, it has a 'posttransfer' editing activity that hydrolyzes mischarged Thr-tRNA(Val) in a tRNA-dependent manner. This is Valine--tRNA ligase (valS) from Nanoarchaeum equitans (strain Kin4-M).